The following is a 251-amino-acid chain: Probable transcriptional regulatory protein cauri_1421 (251 aa).

Positions 1–21 are disordered; it reads MAGHSKWATTKHKKAANDAKR.

Belongs to the TACO1 family.

It is found in the cytoplasm. This is Probable transcriptional regulatory protein cauri_1421 from Corynebacterium aurimucosum (strain ATCC 700975 / DSM 44827 / CIP 107346 / CN-1) (Corynebacterium nigricans).